Consider the following 184-residue polypeptide: Ubiquitin-conjugating enzyme E2-23 kDa (184 aa).

In terms of domain architecture, UBC core spans 1–148 (MSSPSKRREM…VKEYCERYAK (148 aa)). Catalysis depends on C85, which acts as the Glycyl thioester intermediate. The tract at residues 146–184 (YAKPEDISPEEEEEESDEELSDAEGYDSGDEAIMGHADP) is disordered. The segment covering 152–175 (ISPEEEEEESDEELSDAEGYDSGD) has biased composition (acidic residues).

It belongs to the ubiquitin-conjugating enzyme family.

The enzyme catalyses S-ubiquitinyl-[E1 ubiquitin-activating enzyme]-L-cysteine + [E2 ubiquitin-conjugating enzyme]-L-cysteine = [E1 ubiquitin-activating enzyme]-L-cysteine + S-ubiquitinyl-[E2 ubiquitin-conjugating enzyme]-L-cysteine.. The protein operates within protein modification; protein ubiquitination. In terms of biological role, catalyzes the covalent attachment of ubiquitin to other proteins. The chain is Ubiquitin-conjugating enzyme E2-23 kDa (UBC4) from Triticum aestivum (Wheat).